A 211-amino-acid polypeptide reads, in one-letter code: Imidazole glycerol phosphate synthase subunit HisH (211 aa).

Residues 3–211 (VIAVIDYDMG…VNQIRVKAIA (209 aa)) enclose the Glutamine amidotransferase type-1 domain. Cysteine 81 (nucleophile) is an active-site residue. Residues histidine 186 and glutamate 188 contribute to the active site.

In terms of assembly, heterodimer of HisH and HisF.

The protein resides in the cytoplasm. It carries out the reaction 5-[(5-phospho-1-deoxy-D-ribulos-1-ylimino)methylamino]-1-(5-phospho-beta-D-ribosyl)imidazole-4-carboxamide + L-glutamine = D-erythro-1-(imidazol-4-yl)glycerol 3-phosphate + 5-amino-1-(5-phospho-beta-D-ribosyl)imidazole-4-carboxamide + L-glutamate + H(+). The catalysed reaction is L-glutamine + H2O = L-glutamate + NH4(+). It functions in the pathway amino-acid biosynthesis; L-histidine biosynthesis; L-histidine from 5-phospho-alpha-D-ribose 1-diphosphate: step 5/9. Functionally, IGPS catalyzes the conversion of PRFAR and glutamine to IGP, AICAR and glutamate. The HisH subunit catalyzes the hydrolysis of glutamine to glutamate and ammonia as part of the synthesis of IGP and AICAR. The resulting ammonia molecule is channeled to the active site of HisF. This is Imidazole glycerol phosphate synthase subunit HisH from Gloeothece citriformis (strain PCC 7424) (Cyanothece sp. (strain PCC 7424)).